Reading from the N-terminus, the 383-residue chain is Protein KES1 (383 aa).

The segment covering 317-339 (FETASKDKARIENAQRQKRKDEA) has biased composition (basic and acidic residues). The segment at 317–346 (FETASKDKARIENAQRQKRKDEAAAGTPHQ) is disordered.

The protein belongs to the OSBP family.

Its function is as follows. Lipid transporter involved in lipid countertransport between the Golgi complex and membranes of the endoplasmic reticulum: specifically exchanges sterol with phosphatidylinositol 4-phosphate (PI4P), delivering sterol to the Golgi in exchange for PI4P, which is degraded by the SAC1 phosphatase in the endoplasmic reticulum. This chain is Protein KES1 (KES1), found in Mycosarcoma maydis (Corn smut fungus).